Consider the following 151-residue polypeptide: Prefoldin subunit 5 (151 aa).

Residues 15-35 (IDQLKALKEQADLEVNLLQDS) are a coiled coil.

Belongs to the prefoldin subunit alpha family. Heterohexamer of two PFD-alpha type and four PFD-beta type subunits forming prefoldin co-chaperone complex. Interacts with PFD6. Binds to the DELLA protein GAI.

It localises to the cytoplasm. Its subcellular location is the nucleus. Its function is as follows. Binds specifically to cytosolic chaperonin (c-CPN) and transfers target proteins to it. Binds to nascent polypeptide chain and promotes folding in an environment in which there are many competing pathways for nonnative proteins. Together with other chaperonins, contribute to the regulation of gene expression by modulating the spliceosome function on pre-mRNA splicing post-transcriptionally by acting as a co-chaperone of Hsp90 to control levels of LSM8. Required for the biogenesis of tubulins and for subsequent microtubules (MTs) organization and dynamicity. Necessary for tolerance to NaCl salt stress. Involved in the process leading to microtubules dissociation in response to gibberellic acid (GA) probably due to the DELLA proteins-mediated translocation of the prefoldin co-chaperone complex from the cytoplasm to the nucleus. Prevents cold acclimation (e.g. 7 days at 4 degrees Celsius) in a DELLA proteins-dependent manner by promoting nuclear proteasome-mediated HY5 degradation, thus modulating the expression of several genes and reducing anthocyanin biosynthesis, but seems not involved in constitutive freezing tolerance. Contributes to the GA-dependent regulation of PIN2 trafficking at the plasma membrane, thus influencing auxin flux. This Arabidopsis thaliana (Mouse-ear cress) protein is Prefoldin subunit 5.